Reading from the N-terminus, the 382-residue chain is ATP phosphoribosyltransferase regulatory subunit (382 aa).

This sequence belongs to the class-II aminoacyl-tRNA synthetase family. HisZ subfamily. In terms of assembly, heteromultimer composed of HisG and HisZ subunits.

Its subcellular location is the cytoplasm. It functions in the pathway amino-acid biosynthesis; L-histidine biosynthesis; L-histidine from 5-phospho-alpha-D-ribose 1-diphosphate: step 1/9. In terms of biological role, required for the first step of histidine biosynthesis. May allow the feedback regulation of ATP phosphoribosyltransferase activity by histidine. The sequence is that of ATP phosphoribosyltransferase regulatory subunit from Verminephrobacter eiseniae (strain EF01-2).